Reading from the N-terminus, the 394-residue chain is Endothelial cell-selective adhesion molecule (394 aa).

An N-terminal signal peptide occupies residues M1–A29. At Q30–A251 the chain is on the extracellular side. Residues P37 to K146 enclose the Ig-like V-type domain. 4 N-linked (GlcNAc...) asparagine glycosylation sites follow: N111, N172, N216, and N239. Residues P159–D243 form the Ig-like C2-type domain. Residues C177 and C227 are joined by a disulfide bond. The chain crosses the membrane as a helical span at residues V252–L272. Over L273–V394 the chain is Cytoplasmic. Position 304 is a phosphoserine (S304). 2 stretches are compositionally biased toward polar residues: residues S304 to S318 and F335 to S347. The disordered stretch occupies residues S304–S372. 2 positions are modified to phosphothreonine: T336 and T338. A phosphoserine mark is found at S340, S343, S348, and S375.

Interacts with MAGI1. Highly expressed in the heart and lung. Weakly expressed in the kidney and skin. Expression is restricted to the vascular endothelial cells. Expressed in the kidney, heart and tongue (at protein level). Also expressed on megakaryocytes and activated platelets.

It is found in the cell junction. The protein localises to the adherens junction. Its subcellular location is the tight junction. It localises to the cell membrane. In terms of biological role, can mediate aggregation most likely through a homophilic molecular interaction. The protein is Endothelial cell-selective adhesion molecule (Esam) of Mus musculus (Mouse).